Reading from the N-terminus, the 616-residue chain is Chaperone protein HscA (616 aa).

Belongs to the heat shock protein 70 family.

Chaperone involved in the maturation of iron-sulfur cluster-containing proteins. Has a low intrinsic ATPase activity which is markedly stimulated by HscB. Involved in the maturation of IscU. This Pectobacterium atrosepticum (strain SCRI 1043 / ATCC BAA-672) (Erwinia carotovora subsp. atroseptica) protein is Chaperone protein HscA.